Consider the following 304-residue polypeptide: MKKIKCALIGSGNIGTDLIYKIKRSPVLEPVWMVGIDPASEGLARARELGLKTTADGVDGLLPHVLEDGIQIAFDATSAYVHAENSRKLNELGVMMIDLTPAAIGPLCVPPVNLRQHADRVEMNVNMISCAGQATIPIVNAVSRVQGVEYAEIVASLASKSVGPGTRANLDEFTYTTSSAIEKVGGAKKGKALAIINPAEPPLIMRNTIYCLTESAPDQARITESILQMIGEVQKYVPGYRLVNGPSYDGNKVSVFMEVAGLGDYLPKYAGNLDIMTAAATRTAEMFAEEILAGKIKLKTAEVA.

11 to 14 (SGNI) serves as a coordination point for NAD(+). The Acyl-thioester intermediate role is filled by Cys130. NAD(+)-binding positions include 161 to 169 (SVGPGTRAN) and Asn272.

The protein belongs to the acetaldehyde dehydrogenase family.

It carries out the reaction acetaldehyde + NAD(+) + CoA = acetyl-CoA + NADH + H(+). In Azoarcus sp. (strain BH72), this protein is Acetaldehyde dehydrogenase 1 (lapF).